The sequence spans 527 residues: Catalase (527 aa).

A compositionally biased stretch (basic and acidic residues) spans 1–22 (MADSRDPASDQMKLWKEQRAAQ). A disordered region spans residues 1–34 (MADSRDPASDQMKLWKEQRAAQKPDVLTTGGGNP). Alanine 2 carries the N-acetylalanine modification. Serine 9 bears the Phosphoserine mark. Lysine 13 carries the post-translational modification N6-succinyllysine. Active-site residues include histidine 75 and asparagine 148. The NADP(+) site is built by histidine 194, serine 201, arginine 203, and asparagine 213. Lysine 221 bears the N6-succinyllysine mark. At lysine 233 the chain carries N6-acetyllysine. Positions 237, 303, and 305 each coordinate NADP(+). Residue tyrosine 358 coordinates heme. Serine 422 and serine 434 each carry phosphoserine. An N6-acetyllysine; alternate mark is found at lysine 449 and lysine 480. N6-succinyllysine; alternate occurs at positions 449 and 480. The residue at position 499 (lysine 499) is an N6-acetyllysine. Threonine 511 is subject to Phosphothreonine. Residue serine 517 is modified to Phosphoserine. The short motif at 524-527 (KANL) is the Microbody targeting signal; atypical element.

It belongs to the catalase family. Homotetramer. Interacts (via microbody targeting signal) with PEX5, monomeric form interacts with PEX5, leading to its translocation into peroxisomes. It depends on heme as a cofactor. Requires NADP(+) as cofactor.

Its subcellular location is the peroxisome matrix. The enzyme catalyses 2 H2O2 = O2 + 2 H2O. Functionally, catalyzes the degradation of hydrogen peroxide (H(2)O(2)) generated by peroxisomal oxidases to water and oxygen, thereby protecting cells from the toxic effects of hydrogen peroxide. Promotes growth of cells including T-cells, B-cells, myeloid leukemia cells, melanoma cells, mastocytoma cells and normal and transformed fibroblast cells. This chain is Catalase (CAT), found in Canis lupus familiaris (Dog).